We begin with the raw amino-acid sequence, 181 residues long: Peptide deformylase (181 aa).

Positions 104 and 146 each coordinate Fe cation. Glutamate 147 is an active-site residue. Residue histidine 150 coordinates Fe cation.

This sequence belongs to the polypeptide deformylase family. Requires Fe(2+) as cofactor.

It catalyses the reaction N-terminal N-formyl-L-methionyl-[peptide] + H2O = N-terminal L-methionyl-[peptide] + formate. Functionally, removes the formyl group from the N-terminal Met of newly synthesized proteins. Requires at least a dipeptide for an efficient rate of reaction. N-terminal L-methionine is a prerequisite for activity but the enzyme has broad specificity at other positions. This Helicobacter hepaticus (strain ATCC 51449 / 3B1) protein is Peptide deformylase.